Reading from the N-terminus, the 349-residue chain is Magnesium-protoporphyrin IX monomethyl ester [oxidative] cyclase (349 aa).

The protein belongs to the AcsF family. Fe cation serves as cofactor.

It localises to the plastid. It is found in the chloroplast. It catalyses the reaction Mg-protoporphyrin IX 13-monomethyl ester + 3 NADPH + 3 O2 + 2 H(+) = 3,8-divinyl protochlorophyllide a + 3 NADP(+) + 5 H2O. It functions in the pathway porphyrin-containing compound metabolism; chlorophyll biosynthesis (light-independent). In terms of biological role, catalyzes the formation of the isocyclic ring in chlorophyll biosynthesis. Mediates the cyclase reaction, which results in the formation of divinylprotochlorophyllide (Pchlide) characteristic of all chlorophylls from magnesium-protoporphyrin IX 13-monomethyl ester (MgPMME). This Porphyra purpurea (Red seaweed) protein is Magnesium-protoporphyrin IX monomethyl ester [oxidative] cyclase.